A 377-amino-acid chain; its full sequence is NAC domain-containing protein 76 (377 aa).

The 150-residue stretch at 10–159 folds into the NAC domain; that stretch reads VPPGFRFHPT…GWVVCRAFKK (150 aa). Residues 110-165 mediate DNA binding; that stretch reads IGMRKTLVFYKGRAPNGQKTDWIMHEYRLESDENAPPQEEGWVVCRAFKKKPMTGQ. The interval 312–347 is disordered; the sequence is GVSGFGGHHEEDNNKIGHYNNEESNNKGSVETASST. Residues 318-336 are compositionally biased toward basic and acidic residues; that stretch reads GHHEEDNNKIGHYNNEESN. A compositionally biased stretch (polar residues) spans 337 to 347; the sequence is NKGSVETASST.

Belongs to the plant vascular related NAC-domain protein family. In terms of assembly, interacts with NAC030/VND7. Detected in root protoxylem and metaxylem poles and in vessels of protoxylems, outermost metaxylems, inner metaxylems, shoots and hypocotyls. Expressed in roots, hypocotyls, cotyledons and leaves. Present in developing xylems. Specifically expressed in vessels but not in interfascicular fibers in stems.

Its subcellular location is the nucleus. Its function is as follows. Transcription activator that binds to the secondary wall NAC binding element (SNBE), 5'-(T/A)NN(C/T)(T/C/G)TNNNNNNNA(A/C)GN(A/C/T)(A/T)-3', in the promoter of target genes. Involved in xylem formation by promoting the expression of secondary wall-associated transcription factors and of genes involved in secondary wall biosynthesis and programmed cell death, genes driven by the secondary wall NAC binding element (SNBE). Triggers thickening of secondary walls. This is NAC domain-containing protein 76 from Arabidopsis thaliana (Mouse-ear cress).